A 112-amino-acid polypeptide reads, in one-letter code: Cytochrome c-551 (112 aa).

Positions 1-20 (MKSKLSILMIGFALSVLLAA) are cleaved as a signal peptide. A lipid anchor (N-palmitoyl cysteine) is attached at C21. Residue C21 is the site of S-diacylglycerol cysteine attachment. Residues 25 to 35 (DAKEEKTDTGS) show a composition bias toward basic and acidic residues. Positions 25 to 44 (DAKEEKTDTGSKTEATASEG) are disordered. The Cytochrome c domain occupies 39-112 (ATASEGEELY…VIAKWLSEKK (74 aa)). Heme c contacts are provided by C52, C55, H56, and M91.

Post-translationally, binds 1 heme c group covalently per subunit.

The protein resides in the cell membrane. In terms of biological role, electron carrier protein. The polypeptide is Cytochrome c-551 (cccB) (Bacillus subtilis (strain 168)).